We begin with the raw amino-acid sequence, 1029 residues long: Kinesin-like protein KIF17 (1029 aa).

A Kinesin motor domain is found at 5–335 (AVKVVVRCRP…LRYANRAKNI (331 aa)). 91-98 (GQTGSGKS) is an ATP binding site. Positions 346-462 (KDALLREYQE…EENLRKETEA (117 aa)) form a coiled coil. 2 disordered regions span residues 523 to 569 (ELPK…MPTE) and 647 to 673 (VPAP…PPRP). Low complexity predominate over residues 532–551 (SEISLGSSESSSLEETSVSE). The span at 657-673 (SDARPEAEAADDFPPRP) shows a compositional bias: basic and acidic residues. The stretch at 739–846 (QQVLARLQLL…QLEKIDYLAT (108 aa)) forms a coiled coil. 2 disordered regions span residues 908 to 931 (AVST…EPNM) and 968 to 1029 (KSLT…SEPL).

Belongs to the TRAFAC class myosin-kinesin ATPase superfamily. Kinesin family. Homodimer. Interacts with APBA1 (via PDZ domain); the interaction is direct and is required for association of KIF17 with the cargo that is to be transported. Interacts with IFT B complex components IFT52 and IFT57. Interacts with IFT70B. Interacts with PIWIL1. Interacts with TBATA.

Its subcellular location is the cytoplasm. It is found in the cytoskeleton. The protein resides in the cell projection. It localises to the cilium. The protein localises to the dendrite. Dendrite-specific motor protein which, in association with the Apba1-containing complex (LIN-10-LIN-2-LIN-7 complex), transports vesicles containing N-methyl-D-aspartate (NMDA) receptor subunit NR2B along microtubules. The chain is Kinesin-like protein KIF17 (KIF17) from Homo sapiens (Human).